Consider the following 197-residue polypeptide: uncharacterized protein (197 aa).

The signal sequence occupies residues 1 to 23 (MSARAPKELRLALPPCLLNRTFA). The Extracellular portion of the chain corresponds to 24 to 61 (SPNASGSGNTGARGPGAVGSGTCITQVGQQLFQSFSST). A glycan (N-linked (GlcNAc...) asparagine) is linked at N26. The helical transmembrane segment at 62–82 (LVLIVLVTLIFCLIVLSLSTF) threads the bilayer. Residues 83–197 (HIHKRRMKKR…EGLLQTVVLS (115 aa)) lie on the Cytoplasmic side of the membrane. Residues 94 to 180 (MQRAQEEYER…SSPQGAHAAS (87 aa)) form a disordered region. Composition is skewed to basic and acidic residues over residues 96 to 107 (RAQEEYERDHCS) and 125 to 136 (HAKETRLERQPR). The segment covering 141–161 (CAPSNASSLSSSSPGLPCQGP) has biased composition (low complexity). Pro residues predominate over residues 162–171 (CAPPPPPPAS).

The protein resides in the membrane. This is an uncharacterized protein from Homo sapiens (Human).